A 568-amino-acid chain; its full sequence is MMAEQVKCASAGVSSGAGSGPVVNAELEVKKLQELVRKLEKQNEQLRSRAASAAAAPHLLLLPPPPPAAPPPAGLQPLGPRSPPAATATAAASGGLGPAFPGTFCLPSPAPSLLCSLAQPPEAPFVYFKPAAGFFGAGGGGPEPGGAGTPPGAAAAPPSPPPTLLDEVELLDLESVAAWRDEDDYTWLYIGSSKTFTSSEKSLTPLQWCRHVLDNPTPEMEAARRSLCFRLEQGYTSRGSPLSPQSSIDSELSTSELEDDSISMGYKLQDLTDVQIMARLQEESLRQDYASTSASVSRHSSSVSLSSGKKGTCSDQEYDQYSLEDEEEFDHLPPPQPRLPRCSPFQRGIPHSQTFSSIRECRRSPSSQYFPSNNYQQQQYYSPQAQTPDQQPNRTNGDKLRRSMPNLARMPSTTAISSNISSPVTVRNSQSFDSSLHGAGNGISRIQSCIPSPGQLQHRVHSVGHFPVSIRQPLKATAYVSPTVQGSSNMPLSNGLQLYSNTGIPTPNKAAASGIMGRSALPRPSLAINGSNLPRSKIAQPVRSFLQPPKPLSSLSTLRDGNWRDGCY.

Disordered regions lie at residues 1–22 (MMAE…SGPV), 59–92 (LLLL…TAAA), 139–162 (GGGP…SPPP), 235–256 (YTSR…STSE), and 291–403 (STSA…LRRS). Residues 21 to 56 (PVVNAELEVKKLQELVRKLEKQNEQLRSRAASAAAA) adopt a coiled-coil conformation. Residues 62–74 (LPPPPPAAPPPAG) show a composition bias toward pro residues. Positions 75-92 (LQPLGPRSPPAATATAAA) are enriched in low complexity. The span at 139 to 149 (GGGPEPGGAGT) shows a compositional bias: gly residues. Polar residues predominate over residues 235-245 (YTSRGSPLSPQ). Ser243 carries the phosphoserine modification. 2 stretches are compositionally biased toward low complexity: residues 246 to 255 (SSIDSELSTS) and 291 to 307 (STSA…SLSS). The span at 316–329 (QEYDQYSLEDEEEF) shows a compositional bias: acidic residues. Residues 366–384 (SSQYFPSNNYQQQQYYSPQ) show a composition bias toward low complexity. The segment covering 385–395 (AQTPDQQPNRT) has biased composition (polar residues). Residues Arg471 and Arg543 each carry the asymmetric dimethylarginine modification.

This sequence belongs to the SLAIN motif-containing family. In terms of assembly, interacts with MAPRE1, MAPRE2, MAPRE3 and CKAP5. Interacts with ZDHHC17 (via ANK repeats). As to expression, expressed in embryonic stem cells. Expressed in brain.

It localises to the cytoplasm. Its subcellular location is the cytoskeleton. In terms of biological role, microtubule plus-end tracking protein that might be involved in the regulation of cytoplasmic microtubule dynamics, microtubule organization and microtubule elongation. This is SLAIN motif-containing protein 1 (SLAIN1) from Homo sapiens (Human).